The following is a 295-amino-acid chain: Urease accessory protein UreD (295 aa).

It belongs to the UreD family. As to quaternary structure, ureD, UreF and UreG form a complex that acts as a GTP-hydrolysis-dependent molecular chaperone, activating the urease apoprotein by helping to assemble the nickel containing metallocenter of UreC. The UreE protein probably delivers the nickel.

It is found in the cytoplasm. In terms of biological role, required for maturation of urease via the functional incorporation of the urease nickel metallocenter. The chain is Urease accessory protein UreD from Saccharophagus degradans (strain 2-40 / ATCC 43961 / DSM 17024).